An 853-amino-acid polypeptide reads, in one-letter code: MSTIDNLDAHTPMMQQYLKLKAQHPEILLFYRMGDFYELFYDDARRASQLLDISLTKRGASAGEPIPMAGIPHHAVENYLAKLVNQGESVAICEQIGDPATSKGPVERKVVRIVTPGTISDEALLQERQDNLLAAIWQDSKGYGYATLDISSGRFRLSEPVDRETMAAELQRTNPAELLYAEDFAEMALIDGRRGLRRRPLWEFEIDTARQQLNLQFGTRDLIGFGVENAPRGLCAAGCLLQYVKDTQRTSLPHIRSITMERQQDSIIMDAATRRNLEITQNLAGGVDNTLASVLDCTVTPMGSRMLKRWLHMPVRDTKTLIERQQTIGALQDVTSELQPVLRQVGDLERILARLALRTARPRDLARMRHAFQQLPELRAQLETVTSAPVQNLREKMGEFTELRDLLERAIIDAPPVLVRDGGVIAPGYNEELDEWRALADGATDYLDRLEIRERERTGLDTLKVGFNAVHGYYIQISRGQSHLAPINYVRRQTLKNAERYIIPELKEYEDKVLTSKGKALALEKQLYDELFDLLLPHLAELQQSANALAELDVLVNLAERAYTLNYTCPTFSDKPGIRITEGRHPVVEQVLNEPFIANPLNLSPQRRMLIITGPNMGGKSTYMRQTALIALLAYIGSYVPAQSVEIGPIDRIFTRVGAADDLASGRSTFMVEMTETANILHNATENSLVLMDEIGRGTSTYDGLSLAWACAENLANKIKALTLFATHYFELTQLPEKMEGVANVHLDALEHGDTIAFMHSVQDGAASKSYGLAVAALAGVPKEVIKRARQKLRELESLSPNAAATQVDGTQMSLLSVAEETSPAVEALENLDPDSLTPRQALEWIYRLKSLV.

Residue 614 to 621 coordinates ATP; that stretch reads GPNMGGKS.

It belongs to the DNA mismatch repair MutS family.

Functionally, this protein is involved in the repair of mismatches in DNA. It is possible that it carries out the mismatch recognition step. This protein has a weak ATPase activity. This is DNA mismatch repair protein MutS from Citrobacter koseri (strain ATCC BAA-895 / CDC 4225-83 / SGSC4696).